A 405-amino-acid polypeptide reads, in one-letter code: Tryptophan synthase beta chain (405 aa).

The residue at position 95 (Lys-95) is an N6-(pyridoxal phosphate)lysine.

This sequence belongs to the TrpB family. In terms of assembly, tetramer of two alpha and two beta chains. The cofactor is pyridoxal 5'-phosphate.

It carries out the reaction (1S,2R)-1-C-(indol-3-yl)glycerol 3-phosphate + L-serine = D-glyceraldehyde 3-phosphate + L-tryptophan + H2O. The protein operates within amino-acid biosynthesis; L-tryptophan biosynthesis; L-tryptophan from chorismate: step 5/5. Functionally, the beta subunit is responsible for the synthesis of L-tryptophan from indole and L-serine. This is Tryptophan synthase beta chain from Pseudomonas putida (strain W619).